The following is a 133-amino-acid chain: MSAPLENLETQLEMFIENVRQIRIIVSDFQPQGQNVLNQKINSLVTGLQEIDKLRSQVQDVYVPFEVFFDYIDQDKNPQLYTKDCVEKALAKNEEVKGKIEGLKKFKTNLLLELYKTFPNEMNNYRAYRKDSM.

It belongs to the Mediator complex subunit 10 family. In terms of assembly, component of the Mediator complex. Interacts with MED4 and MED21.

Its subcellular location is the nucleus. Its function is as follows. Component of the Mediator complex, a coactivator involved in the regulated transcription of nearly all RNA polymerase II-dependent genes. Mediator functions as a bridge to convey information from gene-specific regulatory proteins to the basal RNA polymerase II transcription machinery. Mediator is recruited to promoters by direct interactions with regulatory proteins and serves as a scaffold for the assembly of a functional preinitiation complex with RNA polymerase II and the general transcription factors. Required for activated transcription of the MtnA, MtnB and MtnD genes. This chain is Mediator of RNA polymerase II transcription subunit 10 (MED10), found in Drosophila melanogaster (Fruit fly).